A 155-amino-acid chain; its full sequence is 3-dehydroquinate dehydratase (155 aa).

Tyr31 serves as the catalytic Proton acceptor. Residues Asn83, His89, and Asp96 each coordinate substrate. His109 functions as the Proton donor in the catalytic mechanism. Substrate-binding positions include 110–111 and Arg120; that span reads LS.

The protein belongs to the type-II 3-dehydroquinase family. As to quaternary structure, homododecamer.

It catalyses the reaction 3-dehydroquinate = 3-dehydroshikimate + H2O. Its pathway is metabolic intermediate biosynthesis; chorismate biosynthesis; chorismate from D-erythrose 4-phosphate and phosphoenolpyruvate: step 3/7. Its function is as follows. Catalyzes a trans-dehydration via an enolate intermediate. The sequence is that of 3-dehydroquinate dehydratase from Laribacter hongkongensis (strain HLHK9).